The sequence spans 336 residues: NAC domain-containing protein 100 (336 aa).

Residues 16-166 form the NAC domain; it reads LPPGFRFHPT…EWVICRVFQK (151 aa). Residues 113-172 mediate DNA binding; the sequence is VGMKKTLVFYRGRAPKGQKTNWVMHEYRLEGKFSAHNLPKTAKNEWVICRVFQKSAGGKK. The segment at 313 to 336 is disordered; the sequence is RRFDSQEDPSSSTGPVDLEPFWNY.

The protein resides in the nucleus. In terms of biological role, binds to the promoter regions of genes involved in chlorophyll catabolic processes, such as NYC1, SGR1, SGR2 and PAO. This is NAC domain-containing protein 100 from Arabidopsis thaliana (Mouse-ear cress).